A 481-amino-acid chain; its full sequence is 2-succinylbenzoate--CoA ligase (481 aa).

The protein belongs to the ATP-dependent AMP-binding enzyme family. MenE subfamily.

It catalyses the reaction 2-succinylbenzoate + ATP + CoA = 2-succinylbenzoyl-CoA + AMP + diphosphate. It functions in the pathway quinol/quinone metabolism; 1,4-dihydroxy-2-naphthoate biosynthesis; 1,4-dihydroxy-2-naphthoate from chorismate: step 5/7. It participates in quinol/quinone metabolism; menaquinone biosynthesis. Its function is as follows. Converts 2-succinylbenzoate (OSB) to 2-succinylbenzoyl-CoA (OSB-CoA). This is 2-succinylbenzoate--CoA ligase from Bacillus mycoides (strain KBAB4) (Bacillus weihenstephanensis).